We begin with the raw amino-acid sequence, 159 residues long: Phosphopantetheine adenylyltransferase (159 aa).

Threonine 10 provides a ligand contact to substrate. Residues 10–11 (TF) and histidine 18 contribute to the ATP site. 3 residues coordinate substrate: lysine 42, leucine 74, and arginine 88. ATP-binding positions include 89-91 (GLR), glutamate 99, and 124-130 (YSFISSS).

Belongs to the bacterial CoaD family. As to quaternary structure, homohexamer. The cofactor is Mg(2+).

It is found in the cytoplasm. It catalyses the reaction (R)-4'-phosphopantetheine + ATP + H(+) = 3'-dephospho-CoA + diphosphate. It participates in cofactor biosynthesis; coenzyme A biosynthesis; CoA from (R)-pantothenate: step 4/5. Reversibly transfers an adenylyl group from ATP to 4'-phosphopantetheine, yielding dephospho-CoA (dPCoA) and pyrophosphate. This Campylobacter hominis (strain ATCC BAA-381 / DSM 21671 / CCUG 45161 / LMG 19568 / NCTC 13146 / CH001A) protein is Phosphopantetheine adenylyltransferase.